A 308-amino-acid polypeptide reads, in one-letter code: 2-dehydro-3-deoxy-phosphogluconate/2-dehydro-3-deoxy-6-phosphogalactonate aldolase (308 aa).

Substrate contacts are provided by residues 57–58 (TT), 144–146 (YNY), and 169–171 (KDT). The Schiff-base intermediate with substrate role is filled by K169.

This sequence belongs to the DapA family. KDPG aldolase subfamily. In terms of assembly, homotetramer; dimer of dimers.

It catalyses the reaction 2-dehydro-3-deoxy-6-phospho-D-gluconate = D-glyceraldehyde 3-phosphate + pyruvate. The enzyme catalyses 2-dehydro-3-deoxy-6-phospho-D-galactonate = D-glyceraldehyde 3-phosphate + pyruvate. The protein operates within carbohydrate acid metabolism; 2-dehydro-3-deoxy-D-gluconate degradation; D-glyceraldehyde 3-phosphate and pyruvate from 2-dehydro-3-deoxy-D-gluconate: step 2/2. Its function is as follows. Involved in the degradation of glucose and galactose via the Entner-Doudoroff pathway. Catalyzes the reversible cleavage of 2-keto-3-deoxy-6-phosphogluconate (KDPG) and 2-keto-3-deoxygluconate (KDG) forming pyruvate and glyceraldehyde 3-phosphate or glyceraldehyde, respectively. It is also able to catalyze the reversible cleavage of 2-keto-3-deoxy-6-phosphogalactonate (KDPGal) and 2-keto-3-deoxygalactonate (KDGal). This is 2-dehydro-3-deoxy-phosphogluconate/2-dehydro-3-deoxy-6-phosphogalactonate aldolase (eda) from Saccharolobus solfataricus (strain ATCC 35092 / DSM 1617 / JCM 11322 / P2) (Sulfolobus solfataricus).